The chain runs to 105 residues: Plastocyanin (105 aa).

Residues 1–105 (ETYTVKLGSD…GMVGKITVAG (105 aa)) enclose the Plastocyanin-like domain. Residues histidine 39, cysteine 89, histidine 92, and methionine 97 each coordinate Cu(2+).

It belongs to the plastocyanin family. The cofactor is Cu(2+).

It localises to the cellular thylakoid membrane. Its function is as follows. Participates in electron transfer between P700 and the cytochrome b6-f complex in photosystem I. The sequence is that of Plastocyanin (petE) from Anabaena variabilis.